Consider the following 130-residue polypeptide: Small ribosomal subunit protein uS11c (130 aa).

The protein belongs to the universal ribosomal protein uS11 family. As to quaternary structure, part of the 30S ribosomal subunit.

It is found in the plastid. The protein resides in the chloroplast. The chain is Small ribosomal subunit protein uS11c from Tetradesmus obliquus (Green alga).